We begin with the raw amino-acid sequence, 64 residues long: Alpha-mammal toxin Lqq5 (64 aa).

The region spanning 2-64 is the LCN-type CS-alpha/beta domain; the sequence is KDGYIVDDKN…VSIKEKGRCN (63 aa). Cystine bridges form between Cys-12/Cys-63, Cys-16/Cys-36, Cys-22/Cys-46, and Cys-26/Cys-48. Asn-64 carries the asparagine amide modification.

Belongs to the long (4 C-C) scorpion toxin superfamily. Sodium channel inhibitor family. Alpha subfamily. As to expression, expressed by the venom gland.

The protein resides in the secreted. Alpha toxins bind voltage-independently at site-3 of sodium channels (Nav) and inhibit the inactivation of the activated channels, thereby blocking neuronal transmission. Is active on mammals and bind with high affinity to rat brain synaptosome. Does not display phospholipid-binding activity. This chain is Alpha-mammal toxin Lqq5, found in Leiurus quinquestriatus quinquestriatus (Egyptian scorpion).